The chain runs to 272 residues: Putative phosphoenolpyruvate synthase regulatory protein (272 aa).

152 to 159 (GVSRCGKT) is a binding site for ADP.

This sequence belongs to the pyruvate, phosphate/water dikinase regulatory protein family. PSRP subfamily.

The catalysed reaction is [pyruvate, water dikinase] + ADP = [pyruvate, water dikinase]-phosphate + AMP + H(+). It carries out the reaction [pyruvate, water dikinase]-phosphate + phosphate + H(+) = [pyruvate, water dikinase] + diphosphate. Bifunctional serine/threonine kinase and phosphorylase involved in the regulation of the phosphoenolpyruvate synthase (PEPS) by catalyzing its phosphorylation/dephosphorylation. In Stutzerimonas stutzeri (strain A1501) (Pseudomonas stutzeri), this protein is Putative phosphoenolpyruvate synthase regulatory protein.